Consider the following 224-residue polypeptide: Endonuclease NucS (224 aa).

This sequence belongs to the NucS endonuclease family.

The protein resides in the cytoplasm. Its function is as follows. Cleaves both 3' and 5' ssDNA extremities of branched DNA structures. The chain is Endonuclease NucS from Rhodococcus erythropolis (strain PR4 / NBRC 100887).